We begin with the raw amino-acid sequence, 404 residues long: E3 ubiquitin-protein ligase RNF128 (404 aa).

The N-terminal stretch at Met-1 to Ala-31 is a signal peptide. Residues Asp-62–Ile-166 enclose the PA domain. A helical transmembrane segment spans residues Ile-191–Phe-211. The segment at Cys-260–Lys-301 adopts an RING-type; atypical zinc-finger fold. The disordered stretch occupies residues Ile-336 to Gly-356.

Post-translationally, auto-ubiquitinated. In terms of tissue distribution, expressed in the cement gland, cranial placodes, and the pronephros.

Its subcellular location is the endomembrane system. It is found in the cytoplasm. The protein resides in the perinuclear region. The enzyme catalyses S-ubiquitinyl-[E2 ubiquitin-conjugating enzyme]-L-cysteine + [acceptor protein]-L-lysine = [E2 ubiquitin-conjugating enzyme]-L-cysteine + N(6)-ubiquitinyl-[acceptor protein]-L-lysine.. Its pathway is protein modification; protein ubiquitination. E3 ubiquitin-protein ligase that catalyzes polyubiquitin chains. Converts epidermis into cement gland and neural tissue in whole embryos. The sequence is that of E3 ubiquitin-protein ligase RNF128 (rnf128) from Xenopus laevis (African clawed frog).